The chain runs to 122 residues: Large ribosomal subunit protein uL14c (122 aa).

The protein belongs to the universal ribosomal protein uL14 family. Part of the 50S ribosomal subunit.

It is found in the plastid. It localises to the chloroplast. Binds to 23S rRNA. The protein is Large ribosomal subunit protein uL14c of Guizotia abyssinica (Niger).